Here is a 403-residue protein sequence, read N- to C-terminus: Renin (403 aa).

The N-terminal stretch at 1–22 is a signal peptide; it reads MARCRMPRWGLLLVLWGSCTFG. Residues 23–65 constitute a propeptide, activation peptide; the sequence is LPADTGAFRRIFLKKMPSIRESLKERGVDVAGLGAEWNQFTKR. N-linked (GlcNAc...) asparagine glycosylation occurs at Asn70. A Peptidase A1 domain is found at 85-400; sequence YYGEIGIGTP…DRHNNRIGFA (316 aa). Asp103 is an active-site residue. A disulfide bridge links Cys116 with Cys123. Asn140 carries an N-linked (GlcNAc...) asparagine glycan. Cys279 and Cys283 are disulfide-bonded. Asp288 is an active-site residue. Cys322 and Cys359 are oxidised to a cystine.

Belongs to the peptidase A1 family. In terms of assembly, interacts with ATP6AP2.

It is found in the secreted. It localises to the membrane. The catalysed reaction is Cleavage of Leu-|-Xaa bond in angiotensinogen to generate angiotensin I.. With respect to regulation, interaction with ATP6AP2 results in a 5-fold increased efficiency in angiotensinogen processing. Functionally, renin is a highly specific endopeptidase, whose only known function is to generate angiotensin I from angiotensinogen in the plasma, initiating a cascade of reactions that produce an elevation of blood pressure and increased sodium retention by the kidney. This is Renin (REN) from Canis lupus familiaris (Dog).